The chain runs to 296 residues: Glycine--tRNA ligase alpha subunit (296 aa).

It belongs to the class-II aminoacyl-tRNA synthetase family. In terms of assembly, tetramer of two alpha and two beta subunits.

It is found in the cytoplasm. The catalysed reaction is tRNA(Gly) + glycine + ATP = glycyl-tRNA(Gly) + AMP + diphosphate. The chain is Glycine--tRNA ligase alpha subunit from Synechococcus sp. (strain CC9605).